Here is a 457-residue protein sequence, read N- to C-terminus: MQKYTSEARQLLALAIPVILAQVAQTAMGFVDTVMAGGYSATDMAAVAIGTSIWLPAILFGHGLLLALTPVIAQLNGSGRRERIAHQVRQGFWLAGFVSVLVMIVLWNAGYIIRSMHNIDPALADKAVGYLRALLWGAPGYLFFQVARNQCEGLAKTKPGMVMGFLGLLVNIPVNYIFIYGHFGMPELGGIGCGVATAAVYWVMFIAMLSYIKHARSMRDIRNEKGFGKPDSVVMKRLIQLGLPIALALFFEVTLFAVVALLVSPLGIVDVAGHQIALNFSSLMFVLPMSLAAAVTIRVGYRLGQGSTLGAQTAARTGLGVGICMAVVTAIFTVTLRKHIALLYNDNPEVVALAAQLMLLAAVYQISDSIQVIGSGILRGYKDTRSIFFITFTAYWVLGLPSGYILALTDLVVDRMGPAGFWMGFIIGLTSAAVLMMLRMRYLQRQPSAIILQRAAR.

Helical transmembrane passes span 11 to 31 (LLAL…MGFV), 53 to 73 (IWLP…PVIA), 93 to 113 (WLAG…GYII), 127 to 147 (AVGY…FQVA), 160 to 180 (GMVM…IFIY), 188 to 208 (LGGI…FIAM), 243 to 263 (LPIA…ALLV), 276 to 296 (IALN…AAVT), 314 to 334 (AART…IFTV), 350 to 370 (VVAL…SDSI), 387 to 407 (IFFI…YILA), and 418 to 438 (PAGF…LMML).

This sequence belongs to the multi antimicrobial extrusion (MATE) (TC 2.A.66.1) family. MdtK subfamily.

It localises to the cell inner membrane. Its function is as follows. Multidrug efflux pump that functions probably as a Na(+)/drug antiporter. The chain is Multidrug resistance protein MdtK from Salmonella newport (strain SL254).